A 316-amino-acid chain; its full sequence is Transaldolase 2 (316 aa).

Lys-131 serves as the catalytic Schiff-base intermediate with substrate.

Belongs to the transaldolase family. Type 1 subfamily. In terms of assembly, homodimer.

Its subcellular location is the cytoplasm. The enzyme catalyses D-sedoheptulose 7-phosphate + D-glyceraldehyde 3-phosphate = D-erythrose 4-phosphate + beta-D-fructose 6-phosphate. Its pathway is carbohydrate degradation; pentose phosphate pathway; D-glyceraldehyde 3-phosphate and beta-D-fructose 6-phosphate from D-ribose 5-phosphate and D-xylulose 5-phosphate (non-oxidative stage): step 2/3. Functionally, transaldolase is important for the balance of metabolites in the pentose-phosphate pathway. This chain is Transaldolase 2, found in Salmonella choleraesuis (strain SC-B67).